We begin with the raw amino-acid sequence, 1302 residues long: Vascular endothelial growth factor receptor kdr-like (1302 aa).

The first 28 residues, 1–28, serve as a signal peptide directing secretion; sequence MTPLKTSVKAFFTLHVLFSCISHGLVEG. The Extracellular segment spans residues 29 to 740; the sequence is SRLPDPQLLP…GEDGKPNIEV (712 aa). 7 consecutive Ig-like C2-type domains span residues 34-115, 143-206, 222-318, 326-412, 419-542, 545-636, and 643-728; these read PQLL…HEVS, DPYF…VDNA, KNLA…TKVI, NVTH…ISYK, PKIF…FYVD, PQPF…SALT, and PWLM…AVIT. Intrachain disulfides connect Cys-55–Cys-104 and Cys-150–Cys-199. N-linked (GlcNAc...) asparagine glycosylation is found at Asn-69 and Asn-97. Asn-242, Asn-265, Asn-291, Asn-326, Asn-370, Asn-380, Asn-408, Asn-453, Asn-466, Asn-505, Asn-517, Asn-532, Asn-607, Asn-611, Asn-630, Asn-648, and Asn-655 each carry an N-linked (GlcNAc...) asparagine glycan. A disulfide bridge connects residues Cys-243 and Cys-302. A disulfide bond links Cys-444 and Cys-524. A disulfide bond links Cys-565 and Cys-618. A disulfide bond links Cys-664 and Cys-712. Residues 741–761 form a helical membrane-spanning segment; it reads IILVSTGAAATFLWIMLILFI. Topologically, residues 762–1302 are cytoplasmic; that stretch reads RKLRKPSSAD…YVVRYSTPPV (541 aa). The 331-residue stretch at 809-1139 folds into the Protein kinase domain; that stretch reads LRLGKTLGHG…ELVERLGDLL (331 aa). ATP contacts are provided by residues 815 to 823 and Lys-843; that span reads LGHGAFGKV. Asp-1003 serves as the catalytic Proton acceptor. Residues Tyr-1029, Tyr-1034, and Tyr-1150 each carry the phosphotyrosine; by autocatalysis modification. Disordered regions lie at residues 1159–1179 and 1266–1292; these read TKAD…PVSL and PLVP…PDYN. Residues 1162–1176 are compositionally biased toward polar residues; sequence DPSNQSPTEETSTRP.

This sequence belongs to the protein kinase superfamily. Tyr protein kinase family. CSF-1/PDGF receptor subfamily. Interacts with isoform VEGF165 of vegfaa and isoform VEGF171 of vegfab. In terms of processing, phosphorylated and activated by vegfaa and vegfab. In terms of tissue distribution, first expressed in embryos between 5- and 7-somites. At 7 somites, expressed in discrete bilateral stripes both anteriorly and posteriorly, and in a transverse ectodermal stripe in the hindbrain. From 7-somites, expression seems to extend caudally from the head, and in both directions in the trunk region, until by 20-somites, expression is detected as a continuous band from the anterior head region to the tailbud. Concurrently, cells expressing kdrl in the mid- and posterior trunk regions converge medially. By 24 hours post-fertilization (hpf), expressed in all the endothelial cells lining the vasculature.

Its subcellular location is the cell membrane. It catalyses the reaction L-tyrosyl-[protein] + ATP = O-phospho-L-tyrosyl-[protein] + ADP + H(+). In terms of biological role, receptor for VEGF or VEGFC. Has a tyrosine-protein kinase activity. Combinations of multiple VEGF receptors are required for development of different blood vessel types in the embryo. Involved in angiogenesis, specifically in VEGF-induced sprouting of new blood vessels. Particularly involved in artery formation. Does not appear to be required for hematopoiesis. In Danio rerio (Zebrafish), this protein is Vascular endothelial growth factor receptor kdr-like (kdrl).